Here is an 812-residue protein sequence, read N- to C-terminus: Phosphoenolpyruvate synthase (812 aa).

The Tele-phosphohistidine intermediate role is filled by His-430. Substrate contacts are provided by Arg-520, Arg-588, Glu-690, Gly-711, Ser-712, Asn-713, and Asp-714. Glu-690 is a Mg(2+) binding site. Asp-714 contacts Mg(2+). Residue Cys-761 is the Proton donor of the active site.

The protein belongs to the PEP-utilizing enzyme family. Requires Mg(2+) as cofactor.

The catalysed reaction is pyruvate + ATP + H2O = phosphoenolpyruvate + AMP + phosphate + 2 H(+). It functions in the pathway carbohydrate biosynthesis; gluconeogenesis. Its function is as follows. Catalyzes the phosphorylation of pyruvate to phosphoenolpyruvate. The sequence is that of Phosphoenolpyruvate synthase (ppsA) from Helicobacter pylori (strain ATCC 700392 / 26695) (Campylobacter pylori).